Reading from the N-terminus, the 508-residue chain is Photosystem II CP47 reaction center protein (508 aa).

The next 6 helical transmembrane spans lie at 21–36 (AVHI…WAGS), 101–115 (IVFS…TWHW), 140–156 (GIHL…FGAF), 203–218 (VAAG…FHLS), 237–252 (VLSS…AFIV), and 457–472 (TFAL…HGAR).

This sequence belongs to the PsbB/PsbC family. PsbB subfamily. PSII is composed of 1 copy each of membrane proteins PsbA, PsbB, PsbC, PsbD, PsbE, PsbF, PsbH, PsbI, PsbJ, PsbK, PsbL, PsbM, PsbT, PsbX, PsbY, PsbZ, Psb30/Ycf12, at least 3 peripheral proteins of the oxygen-evolving complex and a large number of cofactors. It forms dimeric complexes. Binds multiple chlorophylls. PSII binds additional chlorophylls, carotenoids and specific lipids. serves as cofactor.

It is found in the plastid. It localises to the chloroplast thylakoid membrane. Functionally, one of the components of the core complex of photosystem II (PSII). It binds chlorophyll and helps catalyze the primary light-induced photochemical processes of PSII. PSII is a light-driven water:plastoquinone oxidoreductase, using light energy to abstract electrons from H(2)O, generating O(2) and a proton gradient subsequently used for ATP formation. The sequence is that of Photosystem II CP47 reaction center protein from Welwitschia mirabilis (Tree tumbo).